The chain runs to 284 residues: Sulfotransferase 2A1 (284 aa).

Lysine 43, serine 44, glycine 45, threonine 46, asparagine 47, and tryptophan 48 together coordinate 3'-phosphoadenylyl sulfate. Histidine 98 serves as the catalytic Proton acceptor. 8 residues coordinate 3'-phosphoadenylyl sulfate: arginine 120, serine 128, tyrosine 183, serine 217, methionine 222, arginine 246, lysine 247, and glycine 248.

It belongs to the sulfotransferase 1 family. Homodimer.

Its subcellular location is the cytoplasm. The enzyme catalyses an alcohol + 3'-phosphoadenylyl sulfate = an alkyl sulfate + adenosine 3',5'-bisphosphate + H(+). It carries out the reaction taurolithocholate + 3'-phosphoadenylyl sulfate = taurolithocholate 3-sulfate + adenosine 3',5'-bisphosphate + H(+). The catalysed reaction is lithocholate + 3'-phosphoadenylyl sulfate = lithocholate sulfate + adenosine 3',5'-bisphosphate + H(+). It catalyses the reaction (24S)-hydroxycholesterol + 3'-phosphoadenylyl sulfate = (24S)-hydroxycholesterol 24-sulfate + adenosine 3',5'-bisphosphate + H(+). The enzyme catalyses (24S)-hydroxycholesterol + 3'-phosphoadenylyl sulfate = (24S)-hydroxycholesterol 3-sulfate + adenosine 3',5'-bisphosphate + H(+). It carries out the reaction (24S)-hydroxycholesterol 24-sulfate + 3'-phosphoadenylyl sulfate = (24S)-hydroxycholesterol 3,24-disulfate + adenosine 3',5'-bisphosphate + H(+). The catalysed reaction is 3beta-hydroxyandrost-5-en-17-one + 3'-phosphoadenylyl sulfate = dehydroepiandrosterone 3-sulfate + adenosine 3',5'-bisphosphate + H(+). It catalyses the reaction pregnenolone + 3'-phosphoadenylyl sulfate = pregnenolone sulfate + adenosine 3',5'-bisphosphate + H(+). The enzyme catalyses androsterone + 3'-phosphoadenylyl sulfate = androsterone 3alpha-sulfate + adenosine 3',5'-bisphosphate + H(+). Sulfotransferase that utilizes 3'-phospho-5'-adenylyl sulfate (PAPS) as sulfonate donor to catalyze the sulfonation of steroids and bile acids in the liver and adrenal glands. Mediates the sulfation of a wide range of steroids and sterols, including pregnenolone, androsterone, DHEA, bile acids, cholesterol and as well many xenobiotics that contain alcohol and phenol functional groups. Sulfonation increases the water solubility of most compounds, and therefore their renal excretion, but it can also result in bioactivation to form active metabolites. Plays an important role in maintening steroid and lipid homeostasis. Plays a key role in bile acid metabolism. In addition, catalyzes the metabolic activation of potent carcinogenic polycyclic arylmethanols. The sequence is that of Sulfotransferase 2A1 (Sult2a1) from Rattus norvegicus (Rat).